The chain runs to 226 residues: dTTP/UTP pyrophosphatase (226 aa).

Asp-85 acts as the Proton acceptor in catalysis.

Belongs to the Maf family. YhdE subfamily. A divalent metal cation is required as a cofactor.

It is found in the cytoplasm. It carries out the reaction dTTP + H2O = dTMP + diphosphate + H(+). The enzyme catalyses UTP + H2O = UMP + diphosphate + H(+). Its function is as follows. Nucleoside triphosphate pyrophosphatase that hydrolyzes dTTP and UTP. May have a dual role in cell division arrest and in preventing the incorporation of modified nucleotides into cellular nucleic acids. This chain is dTTP/UTP pyrophosphatase, found in Psychrobacter cryohalolentis (strain ATCC BAA-1226 / DSM 17306 / VKM B-2378 / K5).